Consider the following 297-residue polypeptide: Glycerol-3-phosphate dehydrogenase [NAD(P)+] (297 aa).

Residues tryptophan 11, arginine 33, and lysine 79 each contribute to the NADPH site. Sn-glycerol 3-phosphate contacts are provided by lysine 79, glycine 107, and serine 109. Alanine 111 contacts NADPH. Positions 161, 214, 224, 225, and 226 each coordinate sn-glycerol 3-phosphate. Lysine 161 acts as the Proton acceptor in catalysis. Arginine 225 contacts NADPH. The NADPH site is built by valine 249 and glutamate 251.

It belongs to the NAD-dependent glycerol-3-phosphate dehydrogenase family.

It is found in the cytoplasm. It catalyses the reaction sn-glycerol 3-phosphate + NAD(+) = dihydroxyacetone phosphate + NADH + H(+). It carries out the reaction sn-glycerol 3-phosphate + NADP(+) = dihydroxyacetone phosphate + NADPH + H(+). The protein operates within membrane lipid metabolism; glycerophospholipid metabolism. Its function is as follows. Catalyzes the reduction of the glycolytic intermediate dihydroxyacetone phosphate (DHAP) to sn-glycerol 3-phosphate (G3P), the key precursor for phospholipid synthesis. The protein is Glycerol-3-phosphate dehydrogenase [NAD(P)+] of Campylobacter jejuni subsp. doylei (strain ATCC BAA-1458 / RM4099 / 269.97).